Reading from the N-terminus, the 375-residue chain is MTLQATPLNAIHRALGARMVDFGGWDMPVNYGSQIEEHNAVRADAGMFDVSHMCVVDLSGIHARAFLRGLLANNIDKLQTPGKALYSCMLDEKGGVIDDLIVYFFAEDRFRLVVNASTAVGDIEWIQSRNTATGSGVTITPRRGDLAPACVSKLAIVAVQGPNARQKVYDAFPSTQPADTLKPFNAVVVHDAEMGELMVARTGYTGEDGFELVVPAENVAGIWEKLSASGVRPAGLGARDTLRLEAGMNLYGQDMDIHTSPLDAGLSWTVDLQSERDFIGKSALLASGQQKTFAGLILRDKGGVLRAHQKVITPAGDGEITSGTFSPSLSQSIAFARLPRDIAPGTEVQVEIRDRKLTATVVKLPFVRNGKALVS.

Belongs to the GcvT family. As to quaternary structure, the glycine cleavage system is composed of four proteins: P, T, L and H.

It catalyses the reaction N(6)-[(R)-S(8)-aminomethyldihydrolipoyl]-L-lysyl-[protein] + (6S)-5,6,7,8-tetrahydrofolate = N(6)-[(R)-dihydrolipoyl]-L-lysyl-[protein] + (6R)-5,10-methylene-5,6,7,8-tetrahydrofolate + NH4(+). In terms of biological role, the glycine cleavage system catalyzes the degradation of glycine. The polypeptide is Aminomethyltransferase (Cupriavidus metallidurans (strain ATCC 43123 / DSM 2839 / NBRC 102507 / CH34) (Ralstonia metallidurans)).